The chain runs to 1738 residues: Interaptin (1738 aa).

An actin-binding region spans residues 1–248 (MEHSTPLNEE…TYISLFPKVY (248 aa)). The Cytoplasmic portion of the chain corresponds to 1–1705 (MEHSTPLNEE…RIFPSKNTRP (1705 aa)). Calponin-homology (CH) domains lie at 22–128 (IAQK…LRYQ) and 146–249 (TKPS…KVYQ). 3 disordered regions span residues 285–350 (SKST…SNLS), 1068–1090 (IQQLQSQLNEQRQQQSNQLSEKD), and 1589–1627 (LQQQKQQQQQPPTASSSPSSSPSLLSSTPTPKPQRPNQI). Residues 292-301 (QQNQQQQQQN) are compositionally biased toward low complexity. A compositionally biased stretch (polar residues) spans 302-316 (LLSPNSYRNSISFSK). 3 stretches are compositionally biased toward low complexity: residues 317–344 (SPSFEGSQSTGSSRSISPISSPIKNSTT), 1068–1086 (IQQLQSQLNEQRQQQSNQL), and 1589–1617 (LQQQKQQQQQPPTASSSPSSSPSLLSSTP). Residues 373 to 1598 (EESRVIEKIV…LQQQKQQQQQ (1226 aa)) are a coiled coil. The helical; Anchor for type IV membrane protein transmembrane segment at 1706 to 1726 (IFDWRALFFIGAAVLAISTLF) threads the bilayer.

This sequence belongs to the alpha-actinin family.

Its subcellular location is the nucleus membrane. It localises to the endoplasmic reticulum membrane. It is found in the golgi apparatus. The protein localises to the golgi stack membrane. The protein resides in the cytoplasm. Its subcellular location is the cytoskeleton. It localises to the microtubule organizing center. It is found in the centrosome. May function as linker between cellular membranes and the actin cytoskeleton. Required for normal development of fruiting bodies. This is Interaptin (abpD) from Dictyostelium discoideum (Social amoeba).